Consider the following 277-residue polypeptide: Co-chaperone protein DjlA (277 aa).

Over M1–K4 the chain is Periplasmic. Residues I5–H28 form a helical membrane-spanning segment. Topologically, residues K29–K277 are cytoplasmic. A J domain is found at D211–K277.

Homodimer.

The protein resides in the cell inner membrane. Its function is as follows. Regulatory DnaK co-chaperone. Direct interaction between DnaK and DjlA is needed for the induction of the wcaABCDE operon, involved in the synthesis of a colanic acid polysaccharide capsule, possibly through activation of the RcsB/RcsC phosphotransfer signaling pathway. The colanic acid capsule may help the bacterium survive conditions outside the host. This is Co-chaperone protein DjlA from Photobacterium profundum (strain SS9).